The primary structure comprises 646 residues: WW domain-containing adapter protein with coiled-coil (646 aa).

Residues 1–138 (MVMYARKQQR…YDSADDWSEH (138 aa)) form a disordered region. A compositionally biased stretch (polar residues) spans 23 to 37 (QPFQALKYSSKSHPS). Positions 38-50 (SGDHRHEKMRDAA) are enriched in basic and acidic residues. Serine 53 carries the post-translational modification Phosphoserine. Polar residues predominate over residues 61–75 (RSNSPENKYSDSTGH). The segment covering 103–122 (NHSALHSSNSHSSNPSNNPS) has biased composition (low complexity). The region spanning 129 to 162 (YDSADDWSEHISSSGKKYYYNCRTEVSQWEKPKE) is the WW domain. Phosphoserine is present on residues serine 131 and serine 142. 2 stretches are compositionally biased toward basic and acidic residues: residues 158–174 (EKPK…KEAN) and 182–191 (PKDRDYRREV). Disordered stretches follow at residues 158–352 (EKPK…PQST) and 428–541 (TQAQ…TATV). Residues 211 to 225 (DASSLLPQNILSQTS) show a composition bias toward polar residues. At serine 225 the chain carries Phosphoserine. A compositionally biased stretch (basic and acidic residues) spans 226 to 239 (RHNDKDYRLPRAET). The span at 252–267 (PVVHPTATPSTVPSSP) shows a compositional bias: low complexity. Positions 284-300 (GASTLSKLPTPTASLPA) are enriched in polar residues. Residue threonine 293 is modified to Phosphothreonine. Lysine 302 bears the N6-acetyllysine mark. A compositionally biased stretch (polar residues) spans 316–331 (SHSCTTPSTSSASGLN). Over residues 332–351 (PTSAPPTSASAVPVSPVPQS) the composition is skewed to low complexity. Over residues 428-463 (TQAQPSNQSPMSLTSDASSPRSYVSPRISTPQTNTV) the composition is skewed to polar residues. At serine 446 the chain carries Phosphoserine. At threonine 471 the chain carries Phosphothreonine. Residues 490 to 503 (VSHSATQQPVTADK) are compositionally biased toward polar residues. Residues serine 511, serine 523, and serine 525 each carry the phosphoserine modification. Residues 511 to 524 (SPRSLQRLSSQRSP) show a composition bias toward low complexity. Residues 528–541 (PNHTCSSNASTATV) show a composition bias toward polar residues. The stretch at 617-643 (QATLREQRILFLRQQIKELEKLKNQNS) forms a coiled coil.

In terms of assembly, interacts (via coiled coil domain) with RNF20, RNF40 and UBE2A. Interacts (via WW domain) with RNA polymerase II. Interacts with MTOR and other components of the MTOR pathway including RPTOR, RUVBL1, RUVBL2, TTI1 and TTI2. In terms of processing, phosphorylated on tyrosine residues.

It is found in the nucleus speckle. Its subcellular location is the nucleus. In terms of biological role, acts as a linker between gene transcription and histone H2B monoubiquitination at 'Lys-120' (H2BK120ub1). Interacts with the RNA polymerase II transcriptional machinery via its WW domain and with RNF20-RNF40 via its coiled coil region, thereby linking and regulating H2BK120ub1 and gene transcription. Regulates the cell-cycle checkpoint activation in response to DNA damage. Positive regulator of amino acid starvation-induced autophagy. Also acts as a negative regulator of basal autophagy. Positively regulates MTOR activity by promoting, in an energy-dependent manner, the assembly of the TTT complex composed of TELO2, TTI1 and TTI2 and the RUVBL complex composed of RUVBL1 and RUVBL2 into the TTT-RUVBL complex. This leads to the dimerization of the mTORC1 complex and its subsequent activation. May negatively regulate the ubiquitin proteasome pathway. This chain is WW domain-containing adapter protein with coiled-coil (Wac), found in Mus musculus (Mouse).